We begin with the raw amino-acid sequence, 204 residues long: Histone chaperone ASF1A (204 aa).

Residues 1–156 form an interaction with histone H3, CHAF1B, and HIRA region; it reads MAKVQVNNVV…TRFHINWEDN (156 aa). The Required for interaction with HIRA motif lies at 31–37; the sequence is IEDLSED. Residues 155–204 are required for interaction with HIRA; the sequence is DNTEKLEDAESSNPNLQSLLSTDALPSASKGWSTSENSLNVMLESHMDCM. Ser-192 carries the phosphoserine modification.

Belongs to the ASF1 family. Interacts with histone H3 (via C-terminus), including histone H3.1, H3.2 and H3.3, and histone H4; the interaction with H3 is direct. Probably interacts with the heterodimeric form of H3-H4 taking the place of the second dimer. Interacts with the CHAF1A, CHAF1B and RBBP4 subunits of the CAF-1 complex. Interacts with CABIN1, HAT1, HIRA, NASP, TAF1 and UBN1. Found in a soluble complex with NASP and histones H3 and H4; the interaction with NASP is probably indirect and mediated by H3-H4. Interacts with CDAN1. Found in a cytosolic complex with IPO4 and histones H3 and H4. Interacts with CREBBP. In terms of processing, phosphorylated by TLK1 and TLK2. Highly phosphorylated in S-phase and at lower levels in M-phase. TLK2-mediated phosphorylation at Ser-192 prevents proteasome-dependent degradation. Phosphorylation at Ser-192 by PRKDC in response to DNA damage promotes the histone chaperone activity and ability to replace histones at double-strand breaks (DSBs) at stalled or collapsed replication forks, leading to RAD51 recruitment.

Its subcellular location is the nucleus. The protein localises to the chromosome. Functionally, histone chaperone that facilitates histone deposition and histone exchange and removal during nucleosome assembly and disassembly. Cooperates with chromatin assembly factor 1 (CAF-1) to promote replication-dependent chromatin assembly and with HIRA to promote replication-independent chromatin assembly. Promotes homologous recombination-mediated repair of double-strand breaks (DSBs) at stalled or collapsed replication forks: acts by mediating histone replacement at DSBs, leading to recruitment of the MMS22L-TONSL complex and subsequent loading of RAD51. Also involved in the nuclear import of the histone H3-H4 dimer together with importin-4 (IPO4): specifically recognizes and binds newly synthesized histones with the monomethylation of H3 'Lys-9' and acetylation at 'Lys-14' (H3K9me1K14ac) marks, and diacetylation at 'Lys-5' and 'Lys-12' of H4 (H4K5K12ac) marks in the cytosol. Required for the formation of senescence-associated heterochromatin foci (SAHF) and efficient senescence-associated cell cycle exit. This is Histone chaperone ASF1A from Mus musculus (Mouse).